Reading from the N-terminus, the 109-residue chain is Thioredoxin (109 aa).

One can recognise a Thioredoxin domain in the interval 2–109 (TNCIVELTDG…LKDFLNLYLK (108 aa)). Residues C33 and C36 are joined by a disulfide bond.

It belongs to the thioredoxin family.

Functionally, participates in various redox reactions through the reversible oxidation of its active center dithiol to a disulfide and catalyzes dithiol-disulfide exchange reactions. This is Thioredoxin (trxA) from Buchnera aphidicola subsp. Baizongia pistaciae (strain Bp).